A 188-amino-acid polypeptide reads, in one-letter code: MVAKLFVLVACIALSHAAMVRRDAPPANTLLQDIEKHAAEIHKTFSEQLNSIANSKNTQEVNKAIKDGSDSVLQQLSALSSSLQSAMTDANAKAKTALEQARQNLEKTAEDLRKSHPDVERQAGELRTKLQAAVQNTAQEVQKLAKEVASNVEETNEKLAPKLKEAYENFSKHVEEVQKKVHEAASKQ.

The first 17 residues, 1 to 17 (MVAKLFVLVACIALSHA), serve as a signal peptide directing secretion. Positions 18–22 (AMVRR) are excised as a propeptide.

The protein belongs to the insect apolipophorin-3 family. As to quaternary structure, equilibrium between a soluble monomer and a bound lipoprotein form. Apolipophorin-3 associates with lipophorin during lipid loading until each particle contains 9 or 14 molecules of apolipophorin-3. In terms of tissue distribution, expressed in fat body and secreted in hemolymph. Also expressed in ovary and testis at lower levels.

It is found in the secreted. Its function is as follows. Assists in the loading of diacylglycerol, generated from triacylglycerol stores in the fat body through the action of adipokinetic hormone, into lipophorin, the hemolymph lipoprotein. It increases the lipid carrying capacity of lipophorin by covering the expanding hydrophobic surface resulting from diacylglycerol uptake. It thus plays a critical role in the transport of lipids during flight in several species of insects. This is Apolipophorin-3 from Spodoptera litura (Asian cotton leafworm).